Reading from the N-terminus, the 460-residue chain is Lipase member H-A (460 aa).

Positions 1–26 (MLLSFYFNGLLLVGCLLSWGRSDTEG) are cleaved as a signal peptide. Residues Asn67 and Asn75 are each glycosylated (N-linked (GlcNAc...) asparagine). Ser163 functions as the Nucleophile in the catalytic mechanism. N-linked (GlcNAc...) asparagine glycosylation occurs at Asn177. Asp187 functions as the Charge relay system in the catalytic mechanism. Cysteines 242 and 255 form a disulfide. The active-site Charge relay system is the His257. Intrachain disulfides connect Cys279-Cys290 and Cys293-Cys301. Asn289 carries N-linked (GlcNAc...) asparagine glycosylation. N-linked (GlcNAc...) asparagine glycosylation is present at Asn366. Cys436 and Cys455 are disulfide-bonded.

The protein belongs to the AB hydrolase superfamily. Lipase family.

The protein resides in the secreted. It is found in the cell membrane. The enzyme catalyses 1-hexadecanoyl-2-(9Z-octadecenoyl)-sn-glycero-3-phosphate + H2O = 2-(9Z-octadecenoyl)-sn-glycero-3-phosphate + hexadecanoate + H(+). Hydrolyzes specifically phosphatidic acid (PA) to produce 2-acyl lysophosphatidic acid (LPA; a potent bioactive lipid mediator) and fatty acid. Does not hydrolyze other phospholipids, like phosphatidylserine (PS), phosphatidylcholine (PC) and phosphatidylethanolamine (PE) or triacylglycerol (TG). The protein is Lipase member H-A (liph-a) of Xenopus laevis (African clawed frog).